We begin with the raw amino-acid sequence, 739 residues long: Vascular cell adhesion protein 1 (739 aa).

The first 24 residues, 1 to 24, serve as a signal peptide directing secretion; sequence MPRKMVVIFGASNILWMVFAVSQA. 7 Ig-like C2-type domains span residues 25 to 105, 109 to 212, 223 to 309, 312 to 399, 408 to 506, 511 to 595, and 600 to 684; these read SKME…KKLE, QVEI…KERE, PRNT…LIVQ, PFTV…IKVD, EVEM…QTLY, PRDT…VELI, and PKDI…LTLD. Over 25 to 698 the chain is Extracellular; sequence SKMEIFLEPR…ENNKDYFSPE (674 aa). 5 disulfides stabilise this stretch: C47-C95, C52-C99, C137-C195, C246-C291, and C335-C383. 2 N-linked (GlcNAc...) asparagine glycosylation sites follow: N76 and N77. The N-linked (GlcNAc...) asparagine glycan is linked to N273. The N-linked (GlcNAc...) asparagine glycan is linked to N531. C534 and C579 are joined by a disulfide. The helical transmembrane segment at 699–720 threads the bilayer; it reads LLVLYCASSLIIPAIGMIIYFA. Residues 721-739 are Cytoplasmic-facing; that stretch reads RRANMKGSYSLVEAQKSKV.

In terms of processing, cleaved by the metalloproteinase ADAM17 to generate the soluble form. Post-translationally, sialoglycoprotein. Ubiquitinated by TRIM65 via 'Lys-48'-linked ubiquitination; leading to proteasomal degradation.

It is found in the cell membrane. The protein resides in the secreted. Functionally, cell adhesion glycoprotein predominantly expressed on the surface of endothelial cells that plays an important role in immune surveillance and inflammation. Acts as a major regulator of leukocyte adhesion to the endothelium through interaction with different types of integrins. During inflammatory responses, binds ligands on the surface of activated endothelial cells to initiate the activation of calcium channels and the plasma membrane-associated small GTPase RAC1 leading to leukocyte transendothelial migration. Also serves as a quality-control checkpoint for entry into bone marrow by providing a 'don't-eat-me' stamping in the context of major histocompatibility complex (MHC) class-I presentation. In Canis lupus familiaris (Dog), this protein is Vascular cell adhesion protein 1 (VCAM1).